The following is a 172-amino-acid chain: ATP-dependent kinase-like protein notR' (172 aa).

This sequence belongs to the YFH7 family.

ATP-dependent kinase-like protein; part of the gene cluster that mediates the biosynthesis of notoamide, a fungal indole alkaloid that belongs to a family of natural products containing a characteristic bicyclo[2.2.2]diazaoctane core. The first step of notoamide biosynthesis involves coupling of L-proline and L-tryptophan by the bimodular NRPS notE', to produce cyclo-L-tryptophan-L-proline called brevianamide F. The reverse prenyltransferase notF' then acts as a deoxybrevianamide E synthase and converts brevianamide F to deoxybrevianamide E via reverse prenylation at C-2 of the indole ring leading to the bicyclo[2.2.2]diazaoctane core. Deoxybrevianamide E is further hydroxylated at C-6 of the indole ring, likely catalyzed by the cytochrome P450 monooxygenase notG', to yield 6-hydroxy-deoxybrevianamide E. 6-hydroxy-deoxybrevianamide E is a specific substrate of the prenyltransferase notC' for normal prenylation at C-7 to produce 6-hydroxy-7-prenyl-deoxybrevianamide, also called notoamide S. As the proposed pivotal branching point in notoamide biosynthesis, notoamide S can be diverted to notoamide E through an oxidative pyran ring closure putatively catalyzed by either notH' cytochrome P450 monooxygenase or the notD' FAD-linked oxidoreductase. This step would be followed by an indole 2,3-epoxidation-initiated pinacol-like rearrangement catalyzed by the notB' FAD-dependent monooxygenase leading to the formation of notoamide C and notoamide D. On the other hand notoamide S is converted to notoamide T by notH' (or notD'), a bifunctional oxidase that also functions as the intramolecular Diels-Alderase responsible for generation of (-)-notoamide T. To generate antipodal (+)-notoaminide T, notH (or notD) in Aspergillus strain MF297-2 is expected to catalyze a Diels-Alder reaction leading to the opposite stereochemistry. The remaining oxidoreductase notD' (or notH') likely catalyzes the oxidative pyran ring formation to yield (-)-stephacidin A. The FAD-dependent monooxygenase notI' is highly similar to notB' and is predicted to catalyze a similar conversion from (-)-stephacidin A to (+)-notoamide B via the 2,3-epoxidation of (-)-stephacidin A followed by a pinacol-type rearrangement. Finally, it remains unclear which enzyme could be responsible for the final hydroxylation steps leading to notoamide A and sclerotiamide. The function of notQ' in the notoamide biosynthesis has not been determined yet. The polypeptide is ATP-dependent kinase-like protein notR' (Aspergillus versicolor).